We begin with the raw amino-acid sequence, 320 residues long: Malate dehydrogenase (320 aa).

Residues 10–15 (GAGQIG) and Asp34 each bind NAD(+). Substrate contacts are provided by Arg83 and Arg89. NAD(+) is bound by residues Asn96 and 119-121 (ITN). The substrate site is built by Asn121 and Arg152. The Proton acceptor role is filled by His176.

It belongs to the LDH/MDH superfamily. MDH type 3 family.

The enzyme catalyses (S)-malate + NAD(+) = oxaloacetate + NADH + H(+). Functionally, catalyzes the reversible oxidation of malate to oxaloacetate. The polypeptide is Malate dehydrogenase (Beijerinckia indica subsp. indica (strain ATCC 9039 / DSM 1715 / NCIMB 8712)).